A 405-amino-acid chain; its full sequence is Envelope glycoprotein G (405 aa).

The N-terminal stretch at 1–19 (MLAVGATLCLLSFLTGATG) is a signal peptide. N-linked (GlcNAc...) asparagine; by host glycosylation is found at Asn-83, Asn-138, Asn-174, Asn-221, and Asn-288. A helical membrane pass occupies residues 389 to 405 (LKTVYICLALIGLAHVP).

It belongs to the alphaherpesvirinae glycoprotein G family.

Its subcellular location is the virion membrane. Its function is as follows. Chemokine-binding protein that inhibits neutrophils' chemotaxis. The polypeptide is Envelope glycoprotein G (gG) (Equine herpesvirus 4 (strain 1942) (EHV-4)).